The sequence spans 301 residues: MSATYAPDRILLEKAETLSEALPYIQRYAGKIFVVKYGGHAMGNPDAAQDFAEDIVLLKAIGIHPVVVHGGGPQIGKMLKALGVESQFIDGLRVTDNETAKIAEMVLSGAINKDIVSWIGRAGGRAVGISGKDAKLVEVEKVKKIRKNSTDGQDENIDLGFVGRPVSVDRRLIDTLTQSGMIPVVAPIGVGADGETYNINADTMAGALAAGLEAARLFLLTDVAGVLDADKKLLRTLTPSQIDSLTKADVISGGMIPKLETCIESVKSGVDAAVILDGRVPHSILIELFTEQGAGTLVKLD.

Residues Gly71–Gly72, Arg93, and Asn198 contribute to the substrate site.

This sequence belongs to the acetylglutamate kinase family. ArgB subfamily.

The protein localises to the cytoplasm. The enzyme catalyses N-acetyl-L-glutamate + ATP = N-acetyl-L-glutamyl 5-phosphate + ADP. Its pathway is amino-acid biosynthesis; L-arginine biosynthesis; N(2)-acetyl-L-ornithine from L-glutamate: step 2/4. Functionally, catalyzes the ATP-dependent phosphorylation of N-acetyl-L-glutamate. The protein is Acetylglutamate kinase of Zymomonas mobilis subsp. mobilis (strain ATCC 31821 / ZM4 / CP4).